The sequence spans 760 residues: Catecholate siderophore receptor Fiu (760 aa).

Positions 1–31 are cleaved as a signal peptide; sequence MENNRNFPARQFHSLTFFAGLCIGITPVAQA. Residues 67–175 enclose the TBDR plug domain; it reads PVADTTRTMT…PTGSINMISK (109 aa). One can recognise a TBDR beta-barrel domain in the interval 180 to 760; it reads DSGIDASASI…TFLLTANMHF (581 aa). Residues 743 to 760 carry the TonB C-terminal box motif; it reads RYHPGEPRTFLLTANMHF.

It belongs to the TonB-dependent receptor family.

The protein localises to the cell outer membrane. Functionally, involved in the active transport across the outer membrane of iron complexed with catecholate siderophores such as dihydroxybenzoylserine and dihydroxybenzoate. It derives its energy for transport by interacting with the trans-periplasmic membrane protein TonB. Can also transport catechol-substituted cephalosporins. Receptor for microcins M, H47 and E492. The sequence is that of Catecholate siderophore receptor Fiu (fiu) from Escherichia coli O157:H7.